Here is a 434-residue protein sequence, read N- to C-terminus: Methyl-coenzyme M reductase subunit beta (434 aa).

Y365 is a coenzyme M binding site. G367 is a coenzyme B binding site.

Belongs to the methyl-coenzyme M reductase beta subunit family. As to quaternary structure, MCR is a hexamer of two alpha, two beta, and two gamma chains, forming a dimer of heterotrimers. Requires coenzyme F430 as cofactor.

The protein localises to the cytoplasm. It carries out the reaction coenzyme B + methyl-coenzyme M = methane + coenzyme M-coenzyme B heterodisulfide. It functions in the pathway one-carbon metabolism; methyl-coenzyme M reduction; methane from methyl-coenzyme M: step 1/1. Component of the methyl-coenzyme M reductase (MCR) I that catalyzes the reductive cleavage of methyl-coenzyme M (CoM-S-CH3 or 2-(methylthio)ethanesulfonate) using coenzyme B (CoB or 7-mercaptoheptanoylthreonine phosphate) as reductant which results in the production of methane and the mixed heterodisulfide of CoB and CoM (CoM-S-S-CoB). This is the final step in methanogenesis. The protein is Methyl-coenzyme M reductase subunit beta (mcrB) of Methanosarcina barkeri (strain Fusaro / DSM 804).